The sequence spans 391 residues: ATP phosphoribosyltransferase regulatory subunit (391 aa).

It belongs to the class-II aminoacyl-tRNA synthetase family. HisZ subfamily. As to quaternary structure, heteromultimer composed of HisG and HisZ subunits.

It is found in the cytoplasm. The protein operates within amino-acid biosynthesis; L-histidine biosynthesis; L-histidine from 5-phospho-alpha-D-ribose 1-diphosphate: step 1/9. Required for the first step of histidine biosynthesis. May allow the feedback regulation of ATP phosphoribosyltransferase activity by histidine. The protein is ATP phosphoribosyltransferase regulatory subunit of Bacillus pumilus (strain SAFR-032).